The following is a 513-amino-acid chain: Beta-glucosidase 5 (513 aa).

Residues 1-26 form the signal peptide; that stretch reads MAAAIAVVYLSLLLLLLHGAAPAVLG. Position 46 (glutamine 46) interacts with a beta-D-glucoside. The active-site Proton donor is glutamate 192. A disulfide bond links cysteine 211 and cysteine 220. Residues asparagine 224 and asparagine 273 are each glycosylated (N-linked (GlcNAc...) asparagine). The a beta-D-glucoside site is built by tyrosine 336 and glutamate 405. Glutamate 405 serves as the catalytic Nucleophile. A glycan (N-linked (GlcNAc...) asparagine) is linked at asparagine 412. A beta-D-glucoside is bound by residues tryptophan 447, 454 to 455, and tyrosine 463; that span reads EY.

It belongs to the glycosyl hydrolase 1 family.

It carries out the reaction Hydrolysis of terminal, non-reducing beta-D-glucosyl residues with release of beta-D-glucose.. In Oryza sativa subsp. japonica (Rice), this protein is Beta-glucosidase 5 (BGLU5).